The chain runs to 279 residues: NADH dehydrogenase [ubiquinone] iron-sulfur protein 3, mitochondrial (279 aa).

Residues 1-27 (MISRTLLKRSLPTVQFLRPFTRSSIRR) constitute a mitochondrion transit peptide. The tract at residues 249–279 (EPVGEGKDFTPESFKLPTPEPEPEKESDEKK) is disordered. Positions 270-279 (EPEKESDEKK) are enriched in basic and acidic residues.

This sequence belongs to the complex I 30 kDa subunit family. Core subunit of respiratory chain NADH dehydrogenase (Complex I).

It localises to the mitochondrion inner membrane. It catalyses the reaction a ubiquinone + NADH + 5 H(+)(in) = a ubiquinol + NAD(+) + 4 H(+)(out). In terms of biological role, core subunit of the mitochondrial membrane respiratory chain NADH dehydrogenase (Complex I) which catalyzes electron transfer from NADH through the respiratory chain, using ubiquinone as an electron acceptor. Plays a role in cell wall integrity and is involved in osmotic and oxidative resistance, yeast to hypha transition and the ability to damage and invade oral epithelial cells. The polypeptide is NADH dehydrogenase [ubiquinone] iron-sulfur protein 3, mitochondrial (ALI1) (Candida albicans (strain SC5314 / ATCC MYA-2876) (Yeast)).